A 62-amino-acid polypeptide reads, in one-letter code: DNA-directed RNA polymerase subunit Rpo10 (62 aa).

Positions 6, 9, 43, and 44 each coordinate Zn(2+).

It belongs to the archaeal Rpo10/eukaryotic RPB10 RNA polymerase subunit family. In terms of assembly, part of the RNA polymerase complex. The cofactor is Zn(2+).

It localises to the cytoplasm. It catalyses the reaction RNA(n) + a ribonucleoside 5'-triphosphate = RNA(n+1) + diphosphate. Functionally, DNA-dependent RNA polymerase (RNAP) catalyzes the transcription of DNA into RNA using the four ribonucleoside triphosphates as substrates. The chain is DNA-directed RNA polymerase subunit Rpo10 from Methanosarcina mazei (strain ATCC BAA-159 / DSM 3647 / Goe1 / Go1 / JCM 11833 / OCM 88) (Methanosarcina frisia).